Reading from the N-terminus, the 86-residue chain is Toxin Td8 (86 aa).

The first 20 residues, 1-20 (MTRFVLFLSCFFLIGMVVEC), serve as a signal peptide directing secretion. Positions 21 to 83 (KDGYLVGDDG…IWNSATNRCR (63 aa)) constitute an LCN-type CS-alpha/beta domain. 4 disulfide bridges follow: C31–C82, C35–C57, C43–C63, and C47–C65. R83 is modified (arginine amide).

As to expression, expressed by the venom gland.

The protein resides in the secreted. Functionally, beta toxins bind voltage-independently at site-4 of sodium channels (Nav) and shift the voltage of activation toward more negative potentials thereby affecting sodium channel activation and promoting spontaneous and repetitive firing. This Tityus discrepans (Venezuelan scorpion) protein is Toxin Td8.